A 319-amino-acid chain; its full sequence is MEDSEKRKQMLKAMRMEAAAQNDDDATTGTETSMSTGHLSNPLAETSNHQQDSFETQRFDYYTDPMAAYSSFKKNKTPKQQYISSPSHQGSSPVPPQFPPSVPPGSLCSEYQAQTNHGGFHAAHYEPRGMAHLSPSHRGPPAGWNNNFRPPPVNHSGPPQWVPRPFPFSQEMPNMGNNRFGGRGSYNNTPPQFSNYGRQNANWGGNTYPNSGRGRSRGRGMNTSFGRDGGRRPMEPGAERFYSNSMAEDPWKHLKPVLWKNCSDASSSSSTGQAWLPKSIAPKKSVTSEATHKTSSNQQSLAEYLAASLDGATCDESSN.

Disordered stretches follow at residues 1-59 (MEDS…TQRF), 71-239 (SFKK…PGAE), and 262-299 (CSDA…SNQQ). Polar residues-rich tracts occupy residues 27–56 (TTGT…SFET) and 78–88 (PKQQYISSPSH). Pro residues predominate over residues 93-103 (PVPPQFPPSVP). Polar residues predominate over residues 185–210 (SYNNTPPQFSNYGRQNANWGGNTYPN). Residues 228–238 (DGGRRPMEPGA) show a composition bias toward basic and acidic residues. Over residues 285–299 (SVTSEATHKTSSNQQ) the composition is skewed to polar residues.

In terms of assembly, interacts with ubiquitin thioesterases UBP12 and UBP13, and with protein phosphatase 2A subunits PP2AB1, PP2AB2, PP2A3, PP2A4, PP2AA1 and PP2AA2. In terms of tissue distribution, expressed in the shoot apical meristem (SAM), embryos, seedlings, root tips, and root and leaf primordia.

The protein resides in the nucleus. It is found in the cytoplasm. It localises to the cytosol. Functionally, involved in miRNAs and siRNAs biogenesis and thus promotes gene silencing. Modulates auxin (IAA) transport-related developmental programs by regulating protein phosphatase 2A (PP2As)-driven auxin efflux carrier PIN proteins recycling and polarity. Required during development. Necessary for abiotic stress (e.g. chilling and salt) tolerance. This chain is Protein SICKLE, found in Arabidopsis thaliana (Mouse-ear cress).